The primary structure comprises 1382 residues: DNA-directed RNA polymerase subunit beta (1382 aa).

It belongs to the RNA polymerase beta chain family. As to quaternary structure, the RNAP catalytic core consists of 2 alpha, 1 beta, 1 beta' and 1 omega subunit. When a sigma factor is associated with the core the holoenzyme is formed, which can initiate transcription.

The catalysed reaction is RNA(n) + a ribonucleoside 5'-triphosphate = RNA(n+1) + diphosphate. In terms of biological role, DNA-dependent RNA polymerase catalyzes the transcription of DNA into RNA using the four ribonucleoside triphosphates as substrates. In Anaplasma marginale (strain Florida), this protein is DNA-directed RNA polymerase subunit beta.